The sequence spans 330 residues: Deoxyhypusine hydroxylase (330 aa).

HEAT-like PBS-type repeat units lie at residues 57–83, 90–116, and 199–225; these read LKHE…VLRN, VRHE…YLSD, and ERYR…GFSG. Residues His-59, Glu-60, His-92, and Glu-93 each coordinate Fe cation. Positions 232, 233, 265, and 266 each coordinate Fe cation. One copy of the HEAT-like PBS-type 4 repeat lies at 263-289; sequence VRHEAAEALGGIATPEVLPPLKEWVAR.

It belongs to the deoxyhypusine hydroxylase family. It depends on Fe(2+) as a cofactor.

It localises to the cytoplasm. The protein resides in the nucleus. The enzyme catalyses [eIF5A protein]-deoxyhypusine + AH2 + O2 = [eIF5A protein]-hypusine + A + H2O. It functions in the pathway protein modification; eIF5A hypusination. Its function is as follows. Catalyzes the hydroxylation of the N(6)-(4-aminobutyl)-L-lysine intermediate to form hypusine, an essential post-translational modification only found in mature eIF-5A factor. In Lentinula edodes (Shiitake mushroom), this protein is Deoxyhypusine hydroxylase.